The sequence spans 419 residues: Octopressin receptor (419 aa).

Topologically, residues 1–37 (MENFTEENLHPWITTTTRVYNNVTIFPQYDDELGKFE) are extracellular. N-linked (GlcNAc...) asparagine glycans are attached at residues Asn3 and Asn22. The helical transmembrane segment at 38–58 (IMVLCILCFMALFGNAVVLIV) threads the bilayer. At 59 to 80 (LRIKKTTLTRMQLLIVYLSVTD) the chain is on the cytoplasmic side. Residues 81–101 (ISVALFHILPTIILKINVYFL) traverse the membrane as a helical segment. At 102–108 (GDISACR) the chain is on the extracellular side. Cys107 and Cys182 are disulfide-bonded. The chain crosses the membrane as a helical span at residues 109–129 (VYQFITVAELYASSFVLIVTA). Residues 130-153 (LDRYISICHPLAAHMWTNRRVHMT) lie on the Cytoplasmic side of the membrane. A helical transmembrane segment spans residues 154–174 (TALALFLALMCSLPQLDAVLV). The Extracellular portion of the chain corresponds to 175–192 (DFHGGKLCRPNLTTELAN). An N-linked (GlcNAc...) asparagine glycan is attached at Asn185. Residues 193–213 (IAYSWWAFCSVFFVPLLLLIF) traverse the membrane as a helical segment. Residues 214-292 (FYGRICFVVW…VSKSKIKTIK (79 aa)) lie on the Cytoplasmic side of the membrane. Positions 253–274 (SQTSSENRVKNYSDARDKDSSR) are disordered. Basic and acidic residues predominate over residues 259-274 (NRVKNYSDARDKDSSR). The helical transmembrane segment at 293–313 (LTFSVVACFIICYTPFFTVLM) threads the bilayer. At 314–329 (ARTYDAELSSAQTPAL) the chain is on the extracellular side. The chain crosses the membrane as a helical span at residues 330-350 (VILSLLPSLNSCTNPWIYLAF). The Cytoplasmic portion of the chain corresponds to 351–419 (SGKVWCRQQS…TTALMSSSPC (69 aa)).

The protein belongs to the G-protein coupled receptor 1 family. Vasopressin/oxytocin receptor subfamily. As to expression, present in the nervous system and peripheral tissues.

It localises to the cell membrane. Acts as a receptor for octopressin. The protein is Octopressin receptor of Octopus vulgaris (Common octopus).